The following is a 612-amino-acid chain: Threonine--tRNA ligase (612 aa).

Residues 218 to 509 (DHRKLGVELG…LSEHFGGNFP (292 aa)) form a catalytic region. The Zn(2+) site is built by C310, H361, and H486.

It belongs to the class-II aminoacyl-tRNA synthetase family. In terms of assembly, homodimer. Requires Zn(2+) as cofactor.

The protein resides in the cytoplasm. The enzyme catalyses tRNA(Thr) + L-threonine + ATP = L-threonyl-tRNA(Thr) + AMP + diphosphate + H(+). Its function is as follows. Catalyzes the attachment of threonine to tRNA(Thr) in a two-step reaction: L-threonine is first activated by ATP to form Thr-AMP and then transferred to the acceptor end of tRNA(Thr). Also edits incorrectly charged L-seryl-tRNA(Thr). This is Threonine--tRNA ligase from Helicobacter pylori (strain J99 / ATCC 700824) (Campylobacter pylori J99).